The sequence spans 214 residues: Heat shock protein 26 (214 aa).

S2 bears the N-acetylserine mark. T42 carries the post-translational modification Phosphothreonine. In terms of domain architecture, sHSP spans 86-207; sequence GFPRSVAVPV…KNHVKKIEVS (122 aa). S90 is modified (phosphoserine). T163 is modified (phosphothreonine). The disordered stretch occupies residues 192–214; sequence KPQKDGKNHVKKIEVSSQESWGN. Residues 193 to 205 are compositionally biased toward basic and acidic residues; sequence PQKDGKNHVKKIE. Phosphoserine occurs at positions 208 and 211.

It belongs to the small heat shock protein (HSP20) family. As to quaternary structure, present in large complexes.

Not known. One of the major polypeptides produced on heat shock. The polypeptide is Heat shock protein 26 (HSP26) (Saccharomyces cerevisiae (strain ATCC 204508 / S288c) (Baker's yeast)).